The following is a 70-amino-acid chain: Putative membrane protein insertion efficiency factor (70 aa).

Belongs to the UPF0161 family.

It localises to the cell membrane. In terms of biological role, could be involved in insertion of integral membrane proteins into the membrane. The sequence is that of Putative membrane protein insertion efficiency factor from Symbiobacterium thermophilum (strain DSM 24528 / JCM 14929 / IAM 14863 / T).